The following is a 237-amino-acid chain: Phosphoadenosine 5'-phosphosulfate reductase (237 aa).

Residue Cys-231 is the Nucleophile; cysteine thiosulfonate intermediate of the active site.

It belongs to the PAPS reductase family. CysH subfamily.

It is found in the cytoplasm. It catalyses the reaction [thioredoxin]-disulfide + sulfite + adenosine 3',5'-bisphosphate + 2 H(+) = [thioredoxin]-dithiol + 3'-phosphoadenylyl sulfate. Its pathway is sulfur metabolism; hydrogen sulfide biosynthesis; sulfite from sulfate: step 3/3. Functionally, catalyzes the formation of sulfite from phosphoadenosine 5'-phosphosulfate (PAPS) using thioredoxin as an electron donor. The polypeptide is Phosphoadenosine 5'-phosphosulfate reductase (Xylella fastidiosa (strain 9a5c)).